We begin with the raw amino-acid sequence, 260 residues long: Aspartate/glutamate leucyltransferase (260 aa).

Residues 241-251 (DRLPEEGDRGP) are compositionally biased toward basic and acidic residues. The tract at residues 241–260 (DRLPEEGDRGPARFPASLTE) is disordered.

Belongs to the R-transferase family. Bpt subfamily.

The protein localises to the cytoplasm. The enzyme catalyses N-terminal L-glutamyl-[protein] + L-leucyl-tRNA(Leu) = N-terminal L-leucyl-L-glutamyl-[protein] + tRNA(Leu) + H(+). The catalysed reaction is N-terminal L-aspartyl-[protein] + L-leucyl-tRNA(Leu) = N-terminal L-leucyl-L-aspartyl-[protein] + tRNA(Leu) + H(+). In terms of biological role, functions in the N-end rule pathway of protein degradation where it conjugates Leu from its aminoacyl-tRNA to the N-termini of proteins containing an N-terminal aspartate or glutamate. This is Aspartate/glutamate leucyltransferase from Gluconacetobacter diazotrophicus (strain ATCC 49037 / DSM 5601 / CCUG 37298 / CIP 103539 / LMG 7603 / PAl5).